An 83-amino-acid chain; its full sequence is Short neurotoxin 3FTx-Oxy4 (83 aa).

The signal sequence occupies residues Met-1–Thr-21. Intrachain disulfides connect Cys-24–Cys-45, Cys-38–Cys-62, Cys-64–Cys-75, and Cys-76–Cys-81.

The protein belongs to the three-finger toxin family. Short-chain subfamily. Type I alpha-neurotoxin sub-subfamily. In terms of tissue distribution, expressed by the venom gland.

It is found in the secreted. In terms of biological role, binds to muscle nicotinic acetylcholine receptor (nAChR) and inhibit acetylcholine from binding to the receptor, thereby impairing neuromuscular transmission. The sequence is that of Short neurotoxin 3FTx-Oxy4 from Oxyuranus microlepidotus (Inland taipan).